The chain runs to 108 residues: UPF0102 protein Sputcn32_3693 (108 aa).

This sequence belongs to the UPF0102 family.

In Shewanella putrefaciens (strain CN-32 / ATCC BAA-453), this protein is UPF0102 protein Sputcn32_3693.